The chain runs to 81 residues: Photosystem I iron-sulfur center (81 aa).

4Fe-4S ferredoxin-type domains are found at residues 2 to 31 and 39 to 68; these read SHSV…MIPW and IASA…VRVY. 8 residues coordinate [4Fe-4S] cluster: C11, C14, C17, C21, C48, C51, C54, and C58.

As to quaternary structure, the eukaryotic PSI reaction center is composed of at least 11 subunits. It depends on [4Fe-4S] cluster as a cofactor.

It is found in the plastid. The protein localises to the chloroplast thylakoid membrane. The catalysed reaction is reduced [plastocyanin] + hnu + oxidized [2Fe-2S]-[ferredoxin] = oxidized [plastocyanin] + reduced [2Fe-2S]-[ferredoxin]. In terms of biological role, apoprotein for the two 4Fe-4S centers FA and FB of photosystem I (PSI); essential for photochemical activity. FB is the terminal electron acceptor of PSI, donating electrons to ferredoxin. The C-terminus interacts with PsaA/B/D and helps assemble the protein into the PSI complex. Required for binding of PsaD and PsaE to PSI. PSI is a plastocyanin-ferredoxin oxidoreductase, converting photonic excitation into a charge separation, which transfers an electron from the donor P700 chlorophyll pair to the spectroscopically characterized acceptors A0, A1, FX, FA and FB in turn. The polypeptide is Photosystem I iron-sulfur center (Zea mays (Maize)).